A 366-amino-acid chain; its full sequence is Probable trehalose-phosphate phosphatase 3 (366 aa).

This sequence belongs to the trehalose phosphatase family. It depends on a divalent metal cation as a cofactor.

The enzyme catalyses alpha,alpha-trehalose 6-phosphate + H2O = alpha,alpha-trehalose + phosphate. Its pathway is glycan biosynthesis; trehalose biosynthesis. Its function is as follows. Removes the phosphate from trehalose 6-phosphate to produce free trehalose. Trehalose accumulation in plant may improve abiotic stress tolerance. The sequence is that of Probable trehalose-phosphate phosphatase 3 (TPP3) from Oryza sativa subsp. japonica (Rice).